We begin with the raw amino-acid sequence, 314 residues long: 4-hydroxy-3-methylbut-2-enyl diphosphate reductase (314 aa).

Cysteine 12 is a [4Fe-4S] cluster binding site. The (2E)-4-hydroxy-3-methylbut-2-enyl diphosphate site is built by histidine 43 and histidine 81. Dimethylallyl diphosphate contacts are provided by histidine 43 and histidine 81. Positions 43 and 81 each coordinate isopentenyl diphosphate. A [4Fe-4S] cluster-binding site is contributed by cysteine 103. Residue histidine 131 participates in (2E)-4-hydroxy-3-methylbut-2-enyl diphosphate binding. Histidine 131 provides a ligand contact to dimethylallyl diphosphate. Position 131 (histidine 131) interacts with isopentenyl diphosphate. Glutamate 133 acts as the Proton donor in catalysis. Threonine 170 provides a ligand contact to (2E)-4-hydroxy-3-methylbut-2-enyl diphosphate. Cysteine 198 contributes to the [4Fe-4S] cluster binding site. Residues serine 226, asparagine 228, and serine 271 each contribute to the (2E)-4-hydroxy-3-methylbut-2-enyl diphosphate site. Positions 226, 228, and 271 each coordinate dimethylallyl diphosphate. Isopentenyl diphosphate is bound by residues serine 226, asparagine 228, and serine 271.

Belongs to the IspH family. Requires [4Fe-4S] cluster as cofactor.

It catalyses the reaction isopentenyl diphosphate + 2 oxidized [2Fe-2S]-[ferredoxin] + H2O = (2E)-4-hydroxy-3-methylbut-2-enyl diphosphate + 2 reduced [2Fe-2S]-[ferredoxin] + 2 H(+). The enzyme catalyses dimethylallyl diphosphate + 2 oxidized [2Fe-2S]-[ferredoxin] + H2O = (2E)-4-hydroxy-3-methylbut-2-enyl diphosphate + 2 reduced [2Fe-2S]-[ferredoxin] + 2 H(+). It functions in the pathway isoprenoid biosynthesis; dimethylallyl diphosphate biosynthesis; dimethylallyl diphosphate from (2E)-4-hydroxy-3-methylbutenyl diphosphate: step 1/1. Its pathway is isoprenoid biosynthesis; isopentenyl diphosphate biosynthesis via DXP pathway; isopentenyl diphosphate from 1-deoxy-D-xylulose 5-phosphate: step 6/6. Catalyzes the conversion of 1-hydroxy-2-methyl-2-(E)-butenyl 4-diphosphate (HMBPP) into a mixture of isopentenyl diphosphate (IPP) and dimethylallyl diphosphate (DMAPP). Acts in the terminal step of the DOXP/MEP pathway for isoprenoid precursor biosynthesis. The sequence is that of 4-hydroxy-3-methylbut-2-enyl diphosphate reductase from Bacillus pumilus (strain SAFR-032).